The primary structure comprises 320 residues: Acetyl-coenzyme A carboxylase carboxyl transferase subunit alpha (320 aa).

A CoA carboxyltransferase C-terminal domain is found at 42–295; sequence IEDKAKAALH…GDAIAQAFSD (254 aa).

It belongs to the AccA family. Acetyl-CoA carboxylase is a heterohexamer composed of biotin carboxyl carrier protein (AccB), biotin carboxylase (AccC) and two subunits each of ACCase subunit alpha (AccA) and ACCase subunit beta (AccD).

It localises to the cytoplasm. The catalysed reaction is N(6)-carboxybiotinyl-L-lysyl-[protein] + acetyl-CoA = N(6)-biotinyl-L-lysyl-[protein] + malonyl-CoA. The protein operates within lipid metabolism; malonyl-CoA biosynthesis; malonyl-CoA from acetyl-CoA: step 1/1. In terms of biological role, component of the acetyl coenzyme A carboxylase (ACC) complex. First, biotin carboxylase catalyzes the carboxylation of biotin on its carrier protein (BCCP) and then the CO(2) group is transferred by the carboxyltransferase to acetyl-CoA to form malonyl-CoA. This is Acetyl-coenzyme A carboxylase carboxyl transferase subunit alpha from Afipia carboxidovorans (strain ATCC 49405 / DSM 1227 / KCTC 32145 / OM5) (Oligotropha carboxidovorans).